The primary structure comprises 475 residues: Protein transport protein Sec61 subunit alpha (475 aa).

10 helical membrane passes run 33–53 (LWTA…LFGI), 76–96 (LMEL…LLAG), 118–138 (LFGM…GMYG), 145–165 (AGIC…VLLL), 173–193 (YGLG…TIVW), 241–261 (NLMN…FQGF), 289–309 (IPII…QMLA), 354–374 (FLDP…CAFF), 420–440 (AAFG…IGAI), and 441–461 (GSGT…EIFV).

Belongs to the SecY/SEC61-alpha family. The SEC61 channel-forming translocon complex consists of channel-forming core components SEC61A1, SEC61B and SEC61G and different auxiliary components such as SEC62 and SEC63. The SEC61 channel associates with the multi-pass translocon (MPT) complex. In terms of tissue distribution, expressed predominantly in epidermal cells of the embryo.

It is found in the endoplasmic reticulum membrane. Its function is as follows. Component of SEC61 channel-forming translocon complex that mediates transport of signal peptide-containing precursor polypeptides across the endoplasmic reticulum (ER). Forms a ribosome receptor and a gated pore in the ER membrane, both functions required for cotranslational translocation of nascent polypeptides. May cooperate with auxiliary protein SEC62, SEC63 and HSPA5/BiP to enable post-translational transport of small presecretory proteins. The SEC61 channel is also involved in ER membrane insertion of transmembrane proteins: it mediates membrane insertion of the first few transmembrane segments of proteins, while insertion of subsequent transmembrane regions of multi-pass membrane proteins is mediated by the multi-pass translocon (MPT) complex. The sequence is that of Protein transport protein Sec61 subunit alpha from Halocynthia roretzi (Sea squirt).